The following is a 197-amino-acid chain: Holliday junction branch migration complex subunit RuvA (197 aa).

Residues 1 to 64 (MYEYIKGKYI…EDFIGIYGFL (64 aa)) form a domain I region. Residues 65–143 (TKDELSMFKL…IDISEEDDEQ (79 aa)) are domain II. A flexible linker region spans residues 144–148 (IINKV). Residues 149-197 (TDDKKVLEAVAALVTLGYSEKEASKVINLCDKNNSLEQIIKEALKHLMK) are domain III.

The protein belongs to the RuvA family. Homotetramer. Forms an RuvA(8)-RuvB(12)-Holliday junction (HJ) complex. HJ DNA is sandwiched between 2 RuvA tetramers; dsDNA enters through RuvA and exits via RuvB. An RuvB hexamer assembles on each DNA strand where it exits the tetramer. Each RuvB hexamer is contacted by two RuvA subunits (via domain III) on 2 adjacent RuvB subunits; this complex drives branch migration. In the full resolvosome a probable DNA-RuvA(4)-RuvB(12)-RuvC(2) complex forms which resolves the HJ.

The protein resides in the cytoplasm. In terms of biological role, the RuvA-RuvB-RuvC complex processes Holliday junction (HJ) DNA during genetic recombination and DNA repair, while the RuvA-RuvB complex plays an important role in the rescue of blocked DNA replication forks via replication fork reversal (RFR). RuvA specifically binds to HJ cruciform DNA, conferring on it an open structure. The RuvB hexamer acts as an ATP-dependent pump, pulling dsDNA into and through the RuvAB complex. HJ branch migration allows RuvC to scan DNA until it finds its consensus sequence, where it cleaves and resolves the cruciform DNA. In Clostridium botulinum (strain Loch Maree / Type A3), this protein is Holliday junction branch migration complex subunit RuvA.